A 692-amino-acid polypeptide reads, in one-letter code: UvrABC system protein B (692 aa).

The Helicase ATP-binding domain occupies 32–187 (ENIENGEKAQ…LLNDLVGIQF (156 aa)). Residue 45 to 52 (GATGTGKT) coordinates ATP. The short motif at 98-121 (YYDYYQPEAYVPSSDTYIEKDSSV) is the Beta-hairpin element. In terms of domain architecture, Helicase C-terminal spans 436–631 (QIDDLVGEIH…TIKKEIRDLI (196 aa)). The UVR domain maps to 656 to 691 (KALVKKLEKEMQQAAAALDFEGAAQLRDMVLELRAM).

The protein belongs to the UvrB family. Forms a heterotetramer with UvrA during the search for lesions. Interacts with UvrC in an incision complex.

It localises to the cytoplasm. Its function is as follows. The UvrABC repair system catalyzes the recognition and processing of DNA lesions. A damage recognition complex composed of 2 UvrA and 2 UvrB subunits scans DNA for abnormalities. Upon binding of the UvrA(2)B(2) complex to a putative damaged site, the DNA wraps around one UvrB monomer. DNA wrap is dependent on ATP binding by UvrB and probably causes local melting of the DNA helix, facilitating insertion of UvrB beta-hairpin between the DNA strands. Then UvrB probes one DNA strand for the presence of a lesion. If a lesion is found the UvrA subunits dissociate and the UvrB-DNA preincision complex is formed. This complex is subsequently bound by UvrC and the second UvrB is released. If no lesion is found, the DNA wraps around the other UvrB subunit that will check the other stand for damage. This is UvrABC system protein B from Lactococcus lactis subsp. cremoris (strain SK11).